Consider the following 332-residue polypeptide: Serine, glycine, tyrosine and glutamine-rich protein (332 aa).

Positions 1–17 (MMKTVLLLVVLVGVAYC) are cleaved as a signal peptide. Residues 39–81 (SSSSSSSSSSGGGGSSGGGASGGGGGGGSSGGGGASGGGGGGS) form a disordered region. Gly residues predominate over residues 48–81 (SGGGGSSGGGASGGGGGGGSSGGGGASGGGGGGS).

As to expression, prismatic layer of shell (at protein level). Expressed primarily in the mantle with highest level in the mantle edge and lower level in the mantle pallium.

The protein resides in the secreted. The protein is Serine, glycine, tyrosine and glutamine-rich protein of Margaritifera margaritifera (Freshwater pearl mussel).